Consider the following 287-residue polypeptide: Co-chaperone protein DjlA (287 aa).

Residues 1-6 lie on the Periplasmic side of the membrane; it reads MQIFGK. Residues 7–30 traverse the membrane as a helical segment; sequence ILGAFFGFLFGGVFGALFGLFIGH. Residues 31–287 are Cytoplasmic-facing; it reads QFDKARRLSQ…DLIKKEKGFK (257 aa). The tract at residues 192–213 is disordered; the sequence is GGFGGQQHQSHHSSSHGGWQQA. One can recognise a J domain in the interval 221–287; sequence DAYKILGIDA…DLIKKEKGFK (67 aa).

Homodimer.

It localises to the cell inner membrane. Its function is as follows. Regulatory DnaK co-chaperone. Direct interaction between DnaK and DjlA is needed for the induction of the wcaABCDE operon, involved in the synthesis of a colanic acid polysaccharide capsule, possibly through activation of the RcsB/RcsC phosphotransfer signaling pathway. The colanic acid capsule may help the bacterium survive conditions outside the host. The polypeptide is Co-chaperone protein DjlA (Vibrio vulnificus (strain YJ016)).